Consider the following 52-residue polypeptide: Rubredoxin (52 aa).

A Rubredoxin-like domain is found at 1–52; it reads MEKWQCTVCGYIYDPEVGDPTQNIPPGTKFEDLPDDWVCPDCGVGKDQFEKI. Cys-6, Cys-9, Cys-39, and Cys-42 together coordinate Fe cation.

Belongs to the rubredoxin family. Requires Fe(3+) as cofactor.

Its function is as follows. Rubredoxin is a small nonheme, iron protein lacking acid-labile sulfide. Its single Fe, chelated to 4 Cys, functions as an electron acceptor and may also stabilize the conformation of the molecule. This is Rubredoxin from Thermoanaerobacterium thermosaccharolyticum (strain ATCC 7956 / DSM 571 / NCIMB 9385 / NCA 3814 / NCTC 13789 / WDCM 00135 / 2032) (Clostridium thermosaccharolyticum).